A 209-amino-acid polypeptide reads, in one-letter code: Kynurenine formamidase (209 aa).

Tryptophan 18 is a binding site for substrate. The Zn(2+) site is built by histidine 48, histidine 52, and aspartate 54. Histidine 58 acts as the Proton donor/acceptor in catalysis. Zn(2+) is bound by residues histidine 160 and glutamate 172.

This sequence belongs to the Cyclase 1 superfamily. KynB family. Homodimer. Zn(2+) is required as a cofactor.

The enzyme catalyses N-formyl-L-kynurenine + H2O = L-kynurenine + formate + H(+). The protein operates within amino-acid degradation; L-tryptophan degradation via kynurenine pathway; L-kynurenine from L-tryptophan: step 2/2. Its function is as follows. Catalyzes the hydrolysis of N-formyl-L-kynurenine to L-kynurenine, the second step in the kynurenine pathway of tryptophan degradation. This is Kynurenine formamidase from Sphingopyxis alaskensis (strain DSM 13593 / LMG 18877 / RB2256) (Sphingomonas alaskensis).